A 158-amino-acid polypeptide reads, in one-letter code: Cytochrome c-type biogenesis protein CcmE (158 aa).

The Cytoplasmic segment spans residues 1–7 (MKPRHRR). Residues 8 to 28 (LTLIALVLGGLGLSAGLALTA) traverse the membrane as a helical; Signal-anchor for type II membrane protein segment. The Periplasmic segment spans residues 29–158 (FQDNLVFFFT…DGHPETTTAY (130 aa)). Residues His-123 and Tyr-127 each contribute to the heme site. The disordered stretch occupies residues 138 to 158 (RIGQGNGTPGPDGHPETTTAY).

It belongs to the CcmE/CycJ family.

The protein localises to the cell inner membrane. Its function is as follows. Heme chaperone required for the biogenesis of c-type cytochromes. Transiently binds heme delivered by CcmC and transfers the heme to apo-cytochromes in a process facilitated by CcmF and CcmH. The sequence is that of Cytochrome c-type biogenesis protein CcmE from Alkalilimnicola ehrlichii (strain ATCC BAA-1101 / DSM 17681 / MLHE-1).